The following is a 354-amino-acid chain: Muscleblind-like protein 3 (354 aa).

4 C3H1-type zinc fingers span residues Trp-14–Arg-42, Asn-48–Pro-74, Ser-174–Asp-202, and Asp-210–Ala-236.

This sequence belongs to the muscleblind family. In terms of tissue distribution, highly expressed in the placenta.

It is found in the nucleus. It localises to the cytoplasm. Its function is as follows. Mediates pre-mRNA alternative splicing regulation. Acts either as activator or repressor of splicing on specific pre-mRNA targets. Inhibits cardiac troponin-T (TNNT2) pre-mRNA exon inclusion but induces insulin receptor (IR) pre-mRNA exon inclusion in muscle. Antagonizes the alternative splicing activity pattern of CELF proteins. May play a role in myotonic dystrophy pathophysiology (DM). Could inhibit terminal muscle differentiation, acting at approximately the time of myogenin induction. This chain is Muscleblind-like protein 3 (MBNL3), found in Homo sapiens (Human).